A 249-amino-acid polypeptide reads, in one-letter code: NADH dehydrogenase [ubiquinone] flavoprotein 2, mitochondrial (249 aa).

The transit peptide at 1-32 directs the protein to the mitochondrion; it reads MFLSAALRARAAGLAAHWGKHIRNLHKTAVQN. Lys61 is modified (N6-acetyllysine). [2Fe-2S] cluster-binding residues include Cys135, Cys140, Cys176, and Cys180. Tyr193 carries the phosphotyrosine; by SRC modification. Residues 213 to 249 form a disordered region; that stretch reads IPKPGPRSGRFSCEPAGGLTSLTEPPKGPGFGVQAGL.

Belongs to the complex I 24 kDa subunit family. As to quaternary structure, core subunit of respiratory chain NADH dehydrogenase (Complex I) which is composed of 45 different subunits. This is a component of the flavoprotein-sulfur (FP) fragment of the enzyme. The cofactor is [2Fe-2S] cluster.

It is found in the mitochondrion inner membrane. It carries out the reaction a ubiquinone + NADH + 5 H(+)(in) = a ubiquinol + NAD(+) + 4 H(+)(out). Functionally, core subunit of the mitochondrial membrane respiratory chain NADH dehydrogenase (Complex I) which catalyzes electron transfer from NADH through the respiratory chain, using ubiquinone as an electron acceptor. Parts of the peripheral arm of the enzyme, where the electrons from NADH are accepted by flavin mononucleotide (FMN) and then passed along a chain of iron-sulfur clusters by electron tunnelling to the final acceptor ubiquinone. Contains one iron-sulfur cluster. The protein is NADH dehydrogenase [ubiquinone] flavoprotein 2, mitochondrial (NDUFV2) of Bos taurus (Bovine).